Reading from the N-terminus, the 76-residue chain is Spermatid nuclear transition protein 3 (76 aa).

Polar residues predominate over residues 1-11 (AKVTEKSWQPQ). Disordered regions lie at residues 1–34 (AKVTEKSWQPQTTSTKRWKKRKTPSQPRSRGKVR) and 56–76 (VITTSRRQKRARRANKFETIP). Positions 16–34 (KRWKKRKTPSQPRSRGKVR) are enriched in basic residues.

It localises to the nucleus. The protein localises to the chromosome. Its function is as follows. Involved in nuclear basic protein transition: histones are replaced by spermatid specific proteins which are themselves replaced by protamines in late spermatids. In Sus scrofa (Pig), this protein is Spermatid nuclear transition protein 3 (TNP3).